The chain runs to 146 residues: Large-conductance mechanosensitive channel (146 aa).

The next 3 membrane-spanning stretches (helical) occupy residues 21–41 (VGIIIGAAFTGIVSSLVADLI), 44–64 (VIGLITGGIDFSNVFVNLGDG), and 83–103 (GAFITAVINFLIIAWVVFLLV).

The protein belongs to the MscL family. In terms of assembly, homopentamer.

Its subcellular location is the cell inner membrane. Functionally, channel that opens in response to stretch forces in the membrane lipid bilayer. May participate in the regulation of osmotic pressure changes within the cell. This chain is Large-conductance mechanosensitive channel, found in Cereibacter sphaeroides (strain ATCC 17025 / ATH 2.4.3) (Rhodobacter sphaeroides).